The following is a 780-amino-acid chain: Cation channel sperm-associated protein 1 (780 aa).

Disordered regions lie at residues 1–37 (MDQN…PGHS), 71–306 (LSSH…QDHH), and 376–412 (QMSK…LQRT). Residues 1–447 (MDQNSVPEKA…EMIRNLTQSL (447 aa)) are Cytoplasmic-facing. Residues 110–122 (SYGEDYHDELQRD) show a composition bias toward basic and acidic residues. Basic residues predominate over residues 211-241 (QVPHRGWPHHHQVHHHGRSRHHEAHQHGKSP). The span at 261–284 (SDYHSEYHQGDHHPSEYHHGDHPH) shows a compositional bias: basic and acidic residues. Residues 285–299 (HTQHHYHQTHRHRDY) show a composition bias toward basic residues. The segment covering 387–401 (STKHSEDWGKEEGQF) has biased composition (basic and acidic residues). The span at 402–412 (QKRKTGRLQRT) shows a compositional bias: basic residues. A helical transmembrane segment spans residues 448–469 (AFETFIFFVVCLNTVMLVAQTF). At 470-478 (AEVEIRGEW) the chain is on the extracellular side. A helical membrane pass occupies residues 479-500 (YFMALDSIFFCIYVVEALLKII). Over 501–508 (ALGLSYFF) the chain is Cytoplasmic. The helical transmembrane segment at 509–531 (DFWNNLDFFIMAMAVLDFLLMQT) threads the bilayer. Residues 532 to 540 (HSFAIYHQS) lie on the Extracellular side of the membrane. Residues 541–563 (LFRILKVFKSLRALRAIRVLRRL) traverse the membrane as a helical segment. At 564 to 581 (SFLTSVQEVTGTLGQSLP) the chain is on the cytoplasmic side. A helical membrane pass occupies residues 582-604 (SIAAILILMFTCLFLFSAVLRAL). The Extracellular portion of the chain corresponds to 605–615 (FRKSDPKRFQN). An intramembrane region (helical; Pore-forming) is located at residues 616-628 (IFTTIFTLFTLLT). Topologically, residues 629-645 (LDDWSLIYMDSRAQGAW) are extracellular. The helical transmembrane segment at 646–671 (YIIPILVIYIIIQYFIFLNLVITVLV) threads the bilayer. Residues 672–780 (DSFQTALFKG…FEAGEEDFRN (109 aa)) are Cytoplasmic-facing.

It belongs to the cation channel sperm-associated (TC 1.A.1.19) family. As to quaternary structure, component of the CatSper complex or CatSpermasome composed of the core pore-forming members CATSPER1, CATSPER2, CATSPER3 and CATSPER4 as well as auxiliary members CATSPERB, CATSPERG, CATSPERD, CATSPERE, CATSPERZ, C2CD6/CATSPERT, TMEM249, TMEM262 and EFCAB9. HSPA1 may be an additional auxiliary complex member. The core complex members CATSPER1, CATSPER2, CATSPER3 and CATSPER4 form a heterotetrameric channel. The auxiliary CATSPERB, CATSPERG, CATSPERD and CATSPERE subunits form a pavilion-like structure over the pore which stabilizes the complex through interactions with CATSPER4, CATSPER3, CATSPER1 and CATSPER2 respectively. TMEM262/CATSPERH interacts with CATSPERB, further stabilizing the complex. C2CD6/CATSPERT interacts at least with CATSPERD and is required for targeting the CatSper complex in the flagellar membrane. Interacts with Ca(v)3.3/CACNA1I, leading to suppression of T-type calcium channel activity. In terms of tissue distribution, testis-specific.

The protein resides in the cell projection. It localises to the cilium. Its subcellular location is the flagellum membrane. It catalyses the reaction Ca(2+)(in) = Ca(2+)(out). Its activity is regulated as follows. The CatSper calcium channel is indirectly activated by extracellular progesterone and prostaglandins following the sequence: progesterone &gt; PGF1-alpha = PGE1 &gt; PGA1 &gt; PGE2 &gt;&gt; PGD2. The CatSper calcium channel is directly inhibited by endocannabinoid 2-arachidonoylglycerol (2AG). Indirect activation by progesterone takes place via the following mechanism: progesterone binds and activates the acylglycerol lipase ABHD2, which in turn mediates hydrolysis of 2AG inhibitor, relieving inhibition of the CatSper channel. The primary effect of progesterone activation is to shift voltage dependence towards more physiological, negative membrane potentials; it is not mediated by metabotropic receptors and second messengers. Sperm capacitation enhances the effect of progesterone by providing additional negative shift. Also activated by the elevation of intracellular pH. Functionally, pore-forming subunit of the CatSper complex, a sperm-specific voltage-gated calcium channel that plays a central role in calcium-dependent physiological responses essential for successful fertilization, such as sperm hyperactivation, acrosome reaction and chemotaxis towards the oocyte. The polypeptide is Cation channel sperm-associated protein 1 (CATSPER1) (Homo sapiens (Human)).